A 136-amino-acid polypeptide reads, in one-letter code: Protein NrdI (136 aa).

The protein belongs to the NrdI family.

Its function is as follows. Probably involved in ribonucleotide reductase function. This Citrobacter koseri (strain ATCC BAA-895 / CDC 4225-83 / SGSC4696) protein is Protein NrdI.